The following is a 154-amino-acid chain: Deoxyuridine 5'-triphosphate nucleotidohydrolase (154 aa).

Residues 64-66 (RSG), asparagine 77, 81-83 (TVD), and lysine 91 contribute to the substrate site.

It belongs to the dUTPase family. As to quaternary structure, homotrimer. It depends on Mg(2+) as a cofactor.

It catalyses the reaction dUTP + H2O = dUMP + diphosphate + H(+). Its pathway is pyrimidine metabolism; dUMP biosynthesis; dUMP from dCTP (dUTP route): step 2/2. Its function is as follows. This enzyme is involved in nucleotide metabolism: it produces dUMP, the immediate precursor of thymidine nucleotides and it decreases the intracellular concentration of dUTP so that uracil cannot be incorporated into DNA. This chain is Deoxyuridine 5'-triphosphate nucleotidohydrolase, found in Mycobacterium leprae (strain Br4923).